A 524-amino-acid polypeptide reads, in one-letter code: REH2-associated factor 1 (524 aa).

The transit peptide at 1 to 22 (MRRWLVASMAPQLHQLLQPVRR) directs the protein to the mitochondrion. The segment at 48–70 (ASCPACSRVVHMCDMLTHLITAH) adopts a C2H2-type 1; atypical zinc-finger fold. The segment at 121 to 147 (YMCNWCDRRSDVYATRDKFLKHVADVH) adopts a C2H2-type 2; atypical zinc-finger fold. The C2H2-type 4 zinc finger occupies 226–249 (FPCELCNRTFNSEIDLLQHLETRH). The C2H2-type 3; atypical zinc-finger motif lies at 286 to 312 (VICDLCVSSSKVYKMPSALFSHIRFKH). 4 C2H2-type zinc fingers span residues 334–357 (FVCTVCQKAFASAAALDGHFNSKH), 376–399 (WWCHDCEKGFSSAKGLHGHMQNKH), 406–429 (HPCPACKRVFADIYSLEEHLSLQH), and 443–465 (VKCSTCERFFLSHEDLHRHAVKH). A disordered region spans residues 463–524 (VKHHKKDPRA…KTTEVSEVTS (62 aa)). Residues 479-500 (APTSASHVAASTSAAVPSEVEA) are compositionally biased toward low complexity.

In terms of assembly, component of the REH2-associated complex (REH2C) composed of helicase REH2, associated factors H2F1 and H2F2, and mRNAs at various editing stages; the formation of the complex is RNA-independent. Within the complex, interacts with REH2; the interaction is direct. Interacts with various editing complexes including the RNA editing core (RECC) complex, the gRNA-binding (GRBC) complex (also known as the MRB1 complex) and the RNA editing mediator (REMC) complex.

The protein resides in the mitochondrion. Functionally, plays an important role in mitochondrial mRNA editing by promoting the assembly of the mRNA editosome. Facilitates the recruitment of mRNA to the REH2C complex and promotes the interaction between various editing complexes including REH2C, GRBC, REMC and RECC complexes. This chain is REH2-associated factor 1, found in Trypanosoma brucei brucei (strain 927/4 GUTat10.1).